Reading from the N-terminus, the 517-residue chain is MSPLALVSVSDKKHIVPFCMELVEQFNYRILSSGGTAKHLIEANIPVIKVADFTNSPEILGGRVKTLHPKIHGGILAKRTDEEHKRDIEANDLELIDLVVVNLYPFKKTVEQGSKWEDSIENIDIGGPSMIRSAAKNHKDVSVLVDPSQYQNFLEESKKGELKDSYKAQLALEAFQHTADYDTAISNWISKERGLQSSKYIESYPLINTLRYGENPHQKALWYGLSNIGWNSAEQLQGKDLSYNNLLDLESALSTVLEFGYAEKDELTTDTFASVILKHNNPCGASISNSASQAFLNALECDSVSAFGGIVAFNSNVDSETAINLKDIFLECVVAPSFDAEALEILKIKKNLRILKLSKDQLPKKKQTSTKSIMGGLLVQDTNDSEDKTESWMSVTKNNPSNQMNLDLNFAWKICKHVKSNAIVIAKDQKTIGIGAGQMNRVGAAKIALQAAGKLCSDAVLASDGFFPFADTVELANEYGIKAIIQPGGSLRDQESIDMCNSKGISMVITQKRHFLH.

In terms of domain architecture, MGS-like spans 1–145 (MSPLALVSVS…KNHKDVSVLV (145 aa)).

This sequence belongs to the PurH family.

It catalyses the reaction (6R)-10-formyltetrahydrofolate + 5-amino-1-(5-phospho-beta-D-ribosyl)imidazole-4-carboxamide = 5-formamido-1-(5-phospho-D-ribosyl)imidazole-4-carboxamide + (6S)-5,6,7,8-tetrahydrofolate. It carries out the reaction IMP + H2O = 5-formamido-1-(5-phospho-D-ribosyl)imidazole-4-carboxamide. It participates in purine metabolism; IMP biosynthesis via de novo pathway; 5-formamido-1-(5-phospho-D-ribosyl)imidazole-4-carboxamide from 5-amino-1-(5-phospho-D-ribosyl)imidazole-4-carboxamide (10-formyl THF route): step 1/1. It functions in the pathway purine metabolism; IMP biosynthesis via de novo pathway; IMP from 5-formamido-1-(5-phospho-D-ribosyl)imidazole-4-carboxamide: step 1/1. The chain is Bifunctional purine biosynthesis protein PurH from Prochlorococcus marinus (strain MIT 9312).